The sequence spans 1070 residues: DNA-directed RNA polymerase subunit beta (1070 aa).

The protein belongs to the RNA polymerase beta chain family. As to quaternary structure, in plastids the minimal PEP RNA polymerase catalytic core is composed of four subunits: alpha, beta, beta', and beta''. When a (nuclear-encoded) sigma factor is associated with the core the holoenzyme is formed, which can initiate transcription.

Its subcellular location is the plastid. The protein localises to the chloroplast. It catalyses the reaction RNA(n) + a ribonucleoside 5'-triphosphate = RNA(n+1) + diphosphate. Its function is as follows. DNA-dependent RNA polymerase catalyzes the transcription of DNA into RNA using the four ribonucleoside triphosphates as substrates. This is DNA-directed RNA polymerase subunit beta from Phaseolus vulgaris (Kidney bean).